The chain runs to 413 residues: L-arginine-specific L-amino acid ligase (413 aa).

One can recognise an ATP-grasp domain in the interval 115–312; sequence KTKLKMEGIP…LWESSLNISV (198 aa). 141–202 serves as a coordination point for ATP; sequence GEKLGWPIIV…EKCIEMEEFH (62 aa). Positions 268 and 281 each coordinate Mg(2+). Residues E268 and E281 each contribute to the Mn(2+) site.

Homodimer. The cofactor is Mg(2+). It depends on Mn(2+) as a cofactor. Co(2+) serves as cofactor.

It carries out the reaction an L-alpha-amino acid + L-arginine + ATP = L-arginyl-L-alpha-amino acid + ADP + phosphate + H(+). Its function is as follows. Catalyzes the synthesis of Arg-Xaa dipeptides in an ATP-dependent manner. Has strict specificity toward arginine as the N-terminal substrate. The chain is L-arginine-specific L-amino acid ligase from Bacillus subtilis.